A 218-amino-acid polypeptide reads, in one-letter code: Antifreeze protein Maxi (218 aa).

The first 23 residues, 1–23, serve as a signal peptide directing secretion; sequence MALSLFTVGQFIFLFWTISITEA.

Belongs to the type-I AFP family. Homodimer. As to expression, detected in blood serum (at protein level). Detected in liver.

Its subcellular location is the secreted. Contributes to protect fish blood from freezing at subzero sea water temperatures. Lowers the blood freezing point by about 1.1 degrees at a concentration of 0.1 mg/ml, and by about 1.5 degrees at a concentration of 0.2 mg/ml. Binds to nascent ice crystals and prevents further growth. The polypeptide is Antifreeze protein Maxi (Pseudopleuronectes americanus (Winter flounder)).